A 207-amino-acid polypeptide reads, in one-letter code: Outer-membrane lipoprotein LolB (207 aa).

The first 26 residues, 1–26 (MSKLKIDTKRRFSLLIALVLIISLSS), serve as a signal peptide directing secretion. A lipid anchor (N-palmitoyl cysteine) is attached at Cys-27. A lipid anchor (S-diacylglycerol cysteine) is attached at Cys-27.

The protein belongs to the LolB family. In terms of assembly, monomer.

The protein resides in the cell outer membrane. Its function is as follows. Plays a critical role in the incorporation of lipoproteins in the outer membrane after they are released by the LolA protein. This Francisella tularensis subsp. tularensis (strain WY96-3418) protein is Outer-membrane lipoprotein LolB.